The sequence spans 357 residues: Non-structural protein NS2 (357 aa).

Disordered stretches follow at residues 169 to 191 and 229 to 266; these read PRLQVHSVAPREESRWMDDDEAK and DERDEGDRDERGDEEQVKTLSDDDDQGEDASDDEHPKT. Residues 233 to 249 show a composition bias toward basic and acidic residues; the sequence is EGDRDERGDEEQVKTLS. The span at 250-260 shows a compositional bias: acidic residues; that stretch reads DDDDQGEDASD.

The protein belongs to the orbivirus non-structural protein NS2 family.

Functionally, single-stranded RNA-binding protein. The polypeptide is Non-structural protein NS2 (Segment-8) (Antilocapra americana (Pronghorn)).